The chain runs to 185 residues: Recombination protein RecR (185 aa).

The C4-type zinc-finger motif lies at 44-59; the sequence is CSVCFHLSSEPVCEIC. The Toprim domain maps to 67–161; it reads NTICVVADSR…KVTRIAFGLP (95 aa).

The protein belongs to the RecR family.

May play a role in DNA repair. It seems to be involved in an RecBC-independent recombinational process of DNA repair. It may act with RecF and RecO. This is Recombination protein RecR from Trichormus variabilis (strain ATCC 29413 / PCC 7937) (Anabaena variabilis).